A 144-amino-acid polypeptide reads, in one-letter code: HTH-type transcriptional regulator LrpC (144 aa).

Residues 3–64 (LDQIDLNIIE…EVDQKKLGLP (62 aa)) enclose the HTH asnC-type domain. Positions 22 to 41 (MRELGRKIKLSPPSVTERVR) form a DNA-binding region, H-T-H motif.

Its function is as follows. Transcriptional regulator with a possible role in regulation of amino acid metabolism. Plays a role in the growth phase transition. This chain is HTH-type transcriptional regulator LrpC (lrpC), found in Bacillus subtilis (strain 168).